The sequence spans 338 residues: Tagatose 1,6-diphosphate aldolase (338 aa).

Belongs to the aldolase LacD family.

It carries out the reaction D-tagatofuranose 1,6-bisphosphate = D-glyceraldehyde 3-phosphate + dihydroxyacetone phosphate. Its pathway is carbohydrate metabolism; D-tagatose 6-phosphate degradation; D-glyceraldehyde 3-phosphate and glycerone phosphate from D-tagatose 6-phosphate: step 2/2. In Listeria innocua serovar 6a (strain ATCC BAA-680 / CLIP 11262), this protein is Tagatose 1,6-diphosphate aldolase.